Reading from the N-terminus, the 494-residue chain is Putative NAD kinase 3 (494 aa).

The protein belongs to the NAD kinase family.

It catalyses the reaction NAD(+) + ATP = ADP + NADP(+) + H(+). The protein is Putative NAD kinase 3 of Oryza sativa subsp. japonica (Rice).